Here is a 907-residue protein sequence, read N- to C-terminus: Whirlin (907 aa).

One can recognise a PDZ 1 domain in the interval 140–223 (LVSLRRAKAH…LVLSVYSAGR (84 aa)). The disordered stretch occupies residues 243–264 (SISPPSGLPQPHGGALRQQEGD). Positions 279-361 (KVNLVLGDGR…LILTVKDVGR (83 aa)) constitute a PDZ 2 domain. Disordered regions lie at residues 502–540 (SMKARQPPGPGAGDTYSMVSYSDTGSSTGSHGTSTTVSS), 565–663 (SVDD…SSKR), 684–717 (QSPPHLKSPSAEATVAGGCLLPPSPSGHPDQTGT), and 742–815 (PQTR…PTST). Residues 521–540 (SYSDTGSSTGSHGTSTTVSS) are compositionally biased toward low complexity. Residues 609 to 626 (PPSSMPSCSGTVFSAPQN) are compositionally biased toward polar residues. The span at 628–642 (SPPAGTAPTPGTSSA) shows a compositional bias: low complexity. Serine 685 carries the phosphoserine modification. Residues 743-762 (QTRTASTLSQLSDSGQTLSE) show a composition bias toward polar residues. Residues 789-800 (SSKELPRNERPT) are compositionally biased toward basic and acidic residues. Positions 816-899 (LVRVKKSAAT…TKDRDYIDFL (84 aa)) constitute a PDZ 3 domain.

As to quaternary structure, forms homooligomers. Interacts (via C-terminal PDZ domain) with MYO15A; this interaction is necessary for localization of WHRN to stereocilia tips. Interacts (via C-terminal PDZ domain) with MPP1/p55. Interacts with LRRC4C/NGL1. Interacts with MYO7A. Interacts with RPGR. Interacts with EPS8. Interacts with CASK. Interacts with CIB2. Component of USH2 complex, composed of ADGRV1, PDZD7, USH2A and WHRN. Interacts (via PDZ domains) with PDZD7; the interaction is direct. Interacts (via N-terminal PDZ domain) with USH2A (via cytoplasmic region). Interacts with ADGRV1/MASS1 (via cytoplasmic region).

It localises to the cytoplasm. The protein localises to the cell projection. Its subcellular location is the stereocilium. It is found in the growth cone. The protein resides in the photoreceptor inner segment. It localises to the synapse. Its function is as follows. Involved in hearing and vision as member of the USH2 complex. Necessary for elongation and maintenance of inner and outer hair cell stereocilia in the organ of Corti in the inner ear. Involved in the maintenance of the hair bundle ankle region, which connects stereocilia in cochlear hair cells of the inner ear. In retina photoreceptors, required for the maintenance of periciliary membrane complex that seems to play a role in regulating intracellular protein transport. The sequence is that of Whirlin from Homo sapiens (Human).